A 462-amino-acid chain; its full sequence is Violaxanthin de-epoxidase, chloroplastic (462 aa).

Cysteines 231 and 362 form a disulfide. Residues 372–437 adopt a coiled-coil conformation; the sequence is IEKTVEEGER…RELSKEEMEF (66 aa). The involved in the binding to the thylakoid membrane stretch occupies residues 380–391; sequence ERIIVKEVEEIE.

The protein belongs to the calycin superfamily. Lipocalin family. In terms of assembly, interacts in vitro with LTO1.

Its subcellular location is the plastid. The protein localises to the chloroplast thylakoid membrane. The catalysed reaction is all-trans-violaxanthin + 2 L-ascorbate = all-trans-zeaxanthin + 2 L-dehydroascorbate + 2 H2O. With respect to regulation, activity limited by low ascorbate availability. Feedback inhibition by zeaxanthin. Requires the presence of micelle-forming lipids such as monogalactosyldiacylglyceride (MGDG). Low concentration of bilayer forming lipids, such as digalactosyldiacylglyceride (DGDG) or phosphatidylcholine, supports a slower but nearly complete activity. 80% of the specific activity in lumenal chloroplast fractions is lost in vitro in the presence of reduced thioredoxin. Its function is as follows. Part of the xanthophyll (or violaxanthin) cycle for controlling the concentration of zeaxanthin in chloroplasts. Catalyzes the two-step mono de-epoxidation reaction. Stereospecific for all-trans xanthophylls. Zeaxanthin induces the dissipation of excitation energy in the chlorophyll of the light-harvesting protein complex of photosystem II. This Arabidopsis thaliana (Mouse-ear cress) protein is Violaxanthin de-epoxidase, chloroplastic.